Consider the following 609-residue polypeptide: Cationic amino acid transporter 3, mitochondrial (609 aa).

Residues 1–14 (MGCLRSLVRRKQFD) constitute a mitochondrion transit peptide. Helical transmembrane passes span 38-58 (LIAI…VGTV), 66-86 (ALAL…FCYA), 104-124 (ICIG…EYTI), 161-181 (IVVD…CCLG), 190-210 (GIVT…GSYL), 226-246 (FPYG…AYIG), 270-290 (ISLL…VGLV), 314-334 (AYLI…GSIL), 361-381 (QVPI…AFFM), 388-408 (GMVS…LLIV), 474-494 (IMFT…FLLP), 499-519 (YSLC…LICI), 534-554 (FICP…MYLL), and 558-578 (GAAT…VYIF).

This sequence belongs to the amino acid-polyamine-organocation (APC) superfamily. Cationic amino acid transporter (CAT) (TC 2.A.3.3) family. In terms of tissue distribution, expressed in roots, stems, flowers, and leaves.

The protein localises to the mitochondrion membrane. Functionally, permease involved in the transport of the cationic neutral or acidic amino acids. The chain is Cationic amino acid transporter 3, mitochondrial (CAT3) from Arabidopsis thaliana (Mouse-ear cress).